We begin with the raw amino-acid sequence, 377 residues long: DNA dC-&gt;dU-editing enzyme APOBEC-3G (377 aa).

Residues 1 to 60 are essential for cytoplasmic localization; the sequence is MNPQIRNMVEQMEPDIFVYYFNNRPILSGRNTVWLCYEVKTKDPSGPPLDANIFQGKLYP. CMP/dCMP-type deaminase domains follow at residues 29-138 and 214-327; these read GRNT…LRIL and GQRE…LRTL. T32 carries the phosphothreonine; by PKA modification. The Zn(2+) site is built by H65, C97, and C100. A necessary for homooligomerization region spans residues 209 to 335; the sequence is KPWVSGQRET…TLHRDGAKIA (127 aa). Residues 213 to 215 form an interaction with DNA region; that stretch reads SGQ. At T218 the chain carries Phosphothreonine; by PKA and CAMK2. H257 serves as a coordination point for Zn(2+). The Proton donor role is filled by E259. Zn(2+) is bound by residues C287 and C290. The tract at residues 312–319 is interaction with DNA; sequence RIYDDQGR.

This sequence belongs to the cytidine and deoxycytidylate deaminase family. In terms of assembly, homodimer. Homooligomer. Can bind RNA to form ribonucleoprotein complexes of high-molecular-mass (HMM) or low-molecular-mass (LMM). HMM is inactive and heterogeneous in protein composition because of binding nonselectively to cellular RNAs, which in turn are associated with variety of cellular proteins. The LMM form which is enzymatically active has few or no RNAs associated. Its ability to form homooligomer is distinct from its ability to assemble into HMM. Interacts with APOBEC3B, APOBEC3F, MOV10, AGO2, EIF4E, EIF4ENIF1, DCP2 and DDX6 in an RNA-dependent manner. Interacts with AGO1, AGO3 and PKA/PRKACA. It depends on Zn(2+) as a cofactor.

The protein localises to the cytoplasm. It localises to the nucleus. Its subcellular location is the P-body. It catalyses the reaction a 2'-deoxycytidine in single-stranded DNA + H2O + H(+) = a 2'-deoxyuridine in single-stranded DNA + NH4(+). Functionally, DNA deaminase (cytidine deaminase) which acts as an inhibitor of retrovirus replication and retrotransposon mobility via deaminase-dependent and -independent mechanisms. Exhibits antiviral activity against vif-deficient: HIV-1 and simian immunodeficiency viruses (SIVs) and also simian foamy virus (SFV). After the penetration of retroviral nucleocapsids into target cells of infection and the initiation of reverse transcription, it can induce the conversion of cytosine to uracil in the minus-sense single-strand viral DNA, leading to G-to-A hypermutations in the subsequent plus-strand viral DNA. The resultant detrimental levels of mutations in the proviral genome, along with a deamination-independent mechanism that works prior to the proviral integration, together exert efficient antiretroviral effects in infected target cells. Selectively targets single-stranded DNA and does not deaminate double-stranded DNA or single- or double-stranded RNA. May inhibit the mobility of LTR retrotransposons. The polypeptide is DNA dC-&gt;dU-editing enzyme APOBEC-3G (APOBEC3G) (Chlorocebus aethiops (Green monkey)).